Consider the following 198-residue polypeptide: Dephospho-CoA kinase (198 aa).

The region spanning Arg4–Trp198 is the DPCK domain. Residue Ala12–Ser17 participates in ATP binding.

Belongs to the CoaE family.

It is found in the cytoplasm. It carries out the reaction 3'-dephospho-CoA + ATP = ADP + CoA + H(+). It functions in the pathway cofactor biosynthesis; coenzyme A biosynthesis; CoA from (R)-pantothenate: step 5/5. In terms of biological role, catalyzes the phosphorylation of the 3'-hydroxyl group of dephosphocoenzyme A to form coenzyme A. This is Dephospho-CoA kinase from Parasynechococcus marenigrum (strain WH8102).